A 157-amino-acid chain; its full sequence is Large ribosomal subunit protein uL11 (157 aa).

It belongs to the universal ribosomal protein uL11 family. As to quaternary structure, part of the ribosomal stalk of the 50S ribosomal subunit. Interacts with L10 and the large rRNA to form the base of the stalk. L10 forms an elongated spine to which L12 dimers bind in a sequential fashion forming a multimeric L10(L12)X complex.

Functionally, forms part of the ribosomal stalk which helps the ribosome interact with GTP-bound translation factors. This chain is Large ribosomal subunit protein uL11, found in Archaeoglobus fulgidus (strain ATCC 49558 / DSM 4304 / JCM 9628 / NBRC 100126 / VC-16).